The sequence spans 129 residues: uncharacterized protein (129 aa).

This is an uncharacterized protein from Sinorhizobium fredii (strain NBRC 101917 / NGR234).